The sequence spans 514 residues: Developmental and secondary metabolism regulator veA (514 aa).

A Velvet domain is found at 26–218 (NRHLWYQLTV…ADQGCHVRIR (193 aa)). The Nuclear localization signal motif lies at 40–45 (ERARAC). A disordered region spans residues 219–463 (RDVRMRKRDA…PIGSKRKHDQ (245 aa)). The segment covering 228–243 (AKSNNGRDRREDDMAR) has biased composition (basic and acidic residues). Low complexity predominate over residues 256–267 (SAAARARSMSNS). Residues 386–396 (SYPSTPVSSHP) show a composition bias toward polar residues. Residues 411 to 448 (KSPSNSVSPSNSSLKITDLLVQPLPSSEPKLEVGSAPC) are PEST. Over residues 412–423 (SPSNSVSPSNSS) the composition is skewed to low complexity.

Belongs to the velvet family. VeA subfamily. As to quaternary structure, component of the heterotrimeric velvet complex composed of laeA, veA and velB; VeA acting as a bridging protein between laeA and velB.

The protein localises to the nucleus. The protein resides in the cytoplasm. Its function is as follows. Component of the velvet transcription factor complex that controls sexual/asexual developmental ratio in response to light, promoting sexual development in the darkness while stimulating asexual sporulation under illumination. The velvet complex hat acts as a global regulator for secondary metabolite gene expression. Controls the expression of the cephalosporin C gene cluster. Regulates hyphal fragmentation. This chain is Developmental and secondary metabolism regulator veA, found in Hapsidospora chrysogenum (strain ATCC 11550 / CBS 779.69 / DSM 880 / IAM 14645 / JCM 23072 / IMI 49137) (Acremonium chrysogenum).